The following is a 409-amino-acid chain: tRNA-specific 2-thiouridylase MnmA (409 aa).

ATP is bound by residues glycine 40–serine 47 and leucine 66. The active-site Nucleophile is cysteine 127. Cysteine 127 and cysteine 237 are joined by a disulfide. Residue glycine 152 participates in ATP binding. The interval arginine 156 to leucine 179 is disordered. The interval lysine 187 to glutamine 189 is interaction with tRNA. Cysteine 237 (cysteine persulfide intermediate) is an active-site residue. An interaction with tRNA region spans residues arginine 342 to tyrosine 343.

The protein belongs to the MnmA/TRMU family.

It localises to the cytoplasm. The catalysed reaction is S-sulfanyl-L-cysteinyl-[protein] + uridine(34) in tRNA + AH2 + ATP = 2-thiouridine(34) in tRNA + L-cysteinyl-[protein] + A + AMP + diphosphate + H(+). Catalyzes the 2-thiolation of uridine at the wobble position (U34) of tRNA, leading to the formation of s(2)U34. The sequence is that of tRNA-specific 2-thiouridylase MnmA from Prochlorococcus marinus (strain MIT 9303).